A 151-amino-acid chain; its full sequence is UPF0208 membrane protein KPN78578_26420 (151 aa).

The next 2 membrane-spanning stretches (helical) occupy residues 46–65 (YAIR…QIAL) and 69–91 (LGPA…WWLG).

This sequence belongs to the UPF0208 family.

The protein resides in the cell inner membrane. The polypeptide is UPF0208 membrane protein KPN78578_26420 (Klebsiella pneumoniae subsp. pneumoniae (strain ATCC 700721 / MGH 78578)).